Reading from the N-terminus, the 1007-residue chain is Calmodulin-binding transcription activator 1 (1007 aa).

The segment at residues 18 to 144 (MEQLLSEAQH…YLEVKGNRTS (127 aa)) is a DNA-binding region (CG-1). Positions 148–164 (KENNSNSVNGTASVNID) are enriched in polar residues. The segment at 148 to 227 (KENNSNSVNG…VHGNRVRESD (80 aa)) is disordered. The segment covering 165-176 (STASPTSTLSSL) has biased composition (low complexity). The span at 183–202 (GDSQQASSVLRPSPEPQTGN) shows a compositional bias: polar residues. Residues 233-398 (DVRALDTVGN…TVECETAAAG (166 aa)) are transcription activation. ANK repeat units lie at residues 612 to 641 (DGQGILHFVAALGYDWAIKPVLAAGVNINF) and 645 to 674 (NGWSALHWAAFSGREETVAVLVSLGADAGA). 2 consecutive IQ domains span residues 821 to 850 (LSCAATHIQKKYRGWKKRKEFLLIRQRIVK) and 844 to 873 (IRQRIVKIQAHVRGHQVRKQYRTVIWSVGL). A calmodulin-binding region spans residues 869-891 (WSVGLLEKIILRWRRKGNGLRGF). Residues 915–943 (QEDEYDYLKEGRKQTEERLQKALTRVKSM) are a coiled coil. Ser-942 is modified (phosphoserine).

Belongs to the CAMTA family. As to expression, expressed in roots, stems, leaves, pollen and siliques.

It localises to the nucleus. Its function is as follows. Transcription activator that binds calmodulin in a calcium-dependent manner in vitro. Binds to the DNA consensus sequence 5'-[ACG]CGCG[GTC]-3'. Regulates transcriptional activity in response to calcium signals. Involved in freezing tolerance. Involved in freezing tolerance in association with CAMTA2 and CAMTA3. Contributes together with CAMTA2 and CAMTA3 to the positive regulation of the cold-induced expression of DREB1A/CBF3, DREB1B/CBF1 and DREB1C/CBF2. Involved in drought stress responses by regulating several drought-responsive genes. Involved in auxin signaling and responses to abiotic stresses. Activates the expression of the V-PPase proton pump AVP1 in pollen. The polypeptide is Calmodulin-binding transcription activator 1 (Arabidopsis thaliana (Mouse-ear cress)).